The chain runs to 189 residues: uncharacterized protein (189 aa).

The N-terminal stretch at 1–23 (MVPPKPALWALLLALLGTAPSRA) is a signal peptide. Asparagine 72 carries an N-linked (GlcNAc...) asparagine glycan.

This is an uncharacterized protein from Homo sapiens (Human).